Here is an 86-residue protein sequence, read N- to C-terminus: Neurotoxin 8-related gene product 1/2/3 (86 aa).

Positions methionine 1–serine 19 are cleaved as a signal peptide. The LCN-type CS-alpha/beta domain occupies arginine 22–asparagine 84. 4 disulfides stabilise this stretch: cysteine 32-cysteine 83, cysteine 36-cysteine 56, cysteine 42-cysteine 66, and cysteine 46-cysteine 68. Asparagine 84 is subject to Asparagine amide.

Belongs to the long (4 C-C) scorpion toxin superfamily. Sodium channel inhibitor family. Alpha subfamily. In terms of tissue distribution, expressed by the venom gland.

The protein resides in the secreted. In terms of biological role, binds voltage-dependently at site-3 of sodium channels (Nav) and inhibits the inactivation of the activated channels, thereby blocking neuronal transmission. This chain is Neurotoxin 8-related gene product 1/2/3 (NTVIIIrgp1), found in Androctonus mauritanicus mauritanicus (Scorpion).